The following is a 241-amino-acid chain: Sec-independent protein translocase protein TatC (241 aa).

6 helical membrane passes run 27-47, 76-96, 122-142, 161-181, 193-213, and 217-237; these read LIIVIAVTLLLMLAIFPFSAG, LTMCFIGAITVGFPLLVYEAF, FVAGGLVAYFVTLPLFFSIVI, IVTNFVAGLGLVFQVPLIIVL, LVKGRLGVYGLLFGVAMFFSP, and LFSQLIVLAVLAILFEVSMVL.

The protein belongs to the TatC family. In terms of assembly, forms a complex with TatA.

It localises to the cell membrane. Functionally, part of the twin-arginine translocation (Tat) system that transports large folded proteins containing a characteristic twin-arginine motif in their signal peptide across membranes. This is Sec-independent protein translocase protein TatC from Methanocella arvoryzae (strain DSM 22066 / NBRC 105507 / MRE50).